A 215-amino-acid polypeptide reads, in one-letter code: Programmed cell death protein 10 homolog (215 aa).

It belongs to the PDCD10 family. Interacts with gck-1. Expressed in pharynx, intestine, germline, vulva and excretory canals.

Its subcellular location is the cytoplasm. The protein resides in the apical cell membrane. Involved in excretory canal elongation during postembryonic development. Plays a role in promoting Golgi stability, ER integrity and vesicle transport probably by regulating the activation of Rho GTPase cdc-42. Involved in fertility. This chain is Programmed cell death protein 10 homolog, found in Caenorhabditis elegans.